The following is a 415-amino-acid chain: Exodeoxyribonuclease 7 large subunit (415 aa).

Belongs to the XseA family. In terms of assembly, heterooligomer composed of large and small subunits.

The protein resides in the cytoplasm. The enzyme catalyses Exonucleolytic cleavage in either 5'- to 3'- or 3'- to 5'-direction to yield nucleoside 5'-phosphates.. Functionally, bidirectionally degrades single-stranded DNA into large acid-insoluble oligonucleotides, which are then degraded further into small acid-soluble oligonucleotides. This chain is Exodeoxyribonuclease 7 large subunit, found in Mycobacterium bovis (strain ATCC BAA-935 / AF2122/97).